The sequence spans 502 residues: DnaJ homolog subfamily C member 3 homolog (502 aa).

The first 25 residues, 1–25 (MIVNKKYFLLICIIILISINCLVLA), serve as a signal peptide directing secretion. TPR repeat units lie at residues 29–62 (IENFLKEGDDLVSKGKYDLANENYSNAIDLIGSD), 69–102 (VSLLFKRAGIYHQKGKNILALSDLNRAIEANPDN), 103–136 (IHARLKRAKIQSSLGRFEEAMDEYKRVLKIRPDN), 184–217 (KEVRLMLCECFFQQGDHRKVLDETMTILKSEPSS), 218–251 (VAALYWRGKTFFSMGEKEIAMKFLKEGLKFDPDN), 264–297 (FEKSTANAQELFNQQKYQDALGQIEDALEIEPNS), 302–335 (TPLYLLKCKCLLKVKKGKESIEACNRALELDELN), and 336–369 (ADALYNRAEAYMYEEDYQKALNDYNKAREHKPND). Residue Asn-51 is glycosylated (N-linked (GlcNAc...) asparagine). A disulfide bridge connects residues Cys-309 and Cys-325. The J domain occupies 390 to 457 (DYYKILGIQK…EKRKRYDMGE (68 aa)).

It is found in the secreted. Its subcellular location is the endoplasmic reticulum lumen. May be involved in the unfolded protein response (UPR) during ER stress. The sequence is that of DnaJ homolog subfamily C member 3 homolog (dnajc3) from Dictyostelium discoideum (Social amoeba).